The sequence spans 775 residues: Hepatocyte growth factor-regulated tyrosine kinase substrate (775 aa).

One can recognise a VHS domain in the interval 15–143 (ATSQLLLETD…IMKVEGHVFP (129 aa)). Residues 160–220 (WVDAEECHRC…VCEPCYEQLN (61 aa)) form an FYVE-type zinc finger. Residues cysteine 166, cysteine 169, cysteine 182, cysteine 185, cysteine 190, and cysteine 193 each coordinate Zn(2+). At lysine 207 the chain carries N6-acetyllysine. Positions 212 and 215 each coordinate Zn(2+). Phosphotyrosine is present on tyrosine 216. A disordered region spans residues 223–319 (AEGKASSTTE…SPVNSSAPLA (97 aa)). Positions 225–541 (GKASSTTELP…QRLQEQEKER (317 aa)) are interaction with SNX1. The UIM domain maps to 258–277 (QEEEELQLALALSQSEAEEK). Polar residues predominate over residues 307 to 316 (LYSSPVNSSA). A phosphotyrosine mark is found at tyrosine 308, tyrosine 329, and tyrosine 334. The interval 338-405 (KQEEARKSPT…NGESEESHEQ (68 aa)) is disordered. The segment at 443–541 (SINTMHPQLL…QRLQEQEKER (99 aa)) is interaction with SNAP25 and TRAK2. The interval 452 to 570 (LELLNQLDER…FPLPYAQLQA (119 aa)) is interaction with STAM. The interaction with NF2 stretch occupies residues 478–775 (ARGALSALRE…GSEAQLISFD (298 aa)). Residue lysine 549 is modified to N6-succinyllysine. Positions 640-657 (PGAQAAPQAQAGPTTSPA) are enriched in low complexity. 2 disordered regions span residues 640-690 (PGAQ…PQTS) and 719-775 (QDAS…ISFD). Residues 658–690 (YSSYQPTPTPGYQSVASQAPQSLPAISQPPQTS) are compositionally biased toward polar residues. A compositionally biased stretch (pro residues) spans 744–761 (TGPPQQQPPVAQPAPTQG).

Component of the ESCRT-0 complex composed of STAM or STAM2 and HGS. Part of a complex at least composed of HSG, STAM2 (or probably STAM) and EPS15. Interacts with STAM. Interacts with STAM2. Interacts with EPS15; the interaction is direct, calcium-dependent and inhibited by SNAP25. Identified in a complex with STAM and LITAF. Found in a complex with STAM and E3 ligase ITCH and DTX3L. Interacts with E3 ligase DTX3L; the interaction brings together STAM and HSG, promotes their recruitment to early endosomes and decreases STAM and HGS ubiquitination by ITCH. Interacts with NF2; the interaction is direct. Interacts with ubiquitin; the interaction is direct. Interacts with VPS37C. Interacts with SMAD1, SMAD2 and SMAD3. Interacts with TSG101; the interaction mediates the association with the ESCRT-I complex. Interacts with SNAP25; the interaction is direct and decreases with addition of increasing concentrations of free calcium. Interacts with SNX1; the interaction is direct. Component of a 550 kDa membrane complex at least composed of HGS and SNX1 but excluding EGFR. Interacts with TRAK1. Interacts with TRAK2. Component of the CART complex, at least composed of ACTN4, HGS/HRS, MYO5B and TRIM3. Interacts with ARRDC3. Identified in a complex containing at least ARRDC4, AVPR2 and HGS. Interacts (via UIM domain) with UBQLN1 (via ubiquitin-like domain). Interacts with LAPTM4B; promotes HGS ubiquitination. Post-translationally, phosphorylated on Tyr-334. This phosphorylation occurs in response to EGF. A minor site of phosphorylation on Tyr-329 is detected. Protein phosphorylation may also be triggered in response to IL-2, GM-CSF and HGF. In terms of processing, ubiquitinated by ITCH. Ubiquitous expression in adult and fetal tissues with higher expression in testis.

It localises to the cytoplasm. Its subcellular location is the early endosome membrane. The protein resides in the endosome. The protein localises to the multivesicular body membrane. Involved in intracellular signal transduction mediated by cytokines and growth factors. When associated with STAM, it suppresses DNA signaling upon stimulation by IL-2 and GM-CSF. Could be a direct effector of PI3-kinase in vesicular pathway via early endosomes and may regulate trafficking to early and late endosomes by recruiting clathrin. May concentrate ubiquitinated receptors within clathrin-coated regions. Involved in down-regulation of receptor tyrosine kinase via multivesicular body (MVBs) when complexed with STAM (ESCRT-0 complex). The ESCRT-0 complex binds ubiquitin and acts as a sorting machinery that recognizes ubiquitinated receptors and transfers them to further sequential lysosomal sorting/trafficking processes. May contribute to the efficient recruitment of SMADs to the activin receptor complex. Involved in receptor recycling via its association with the CART complex, a multiprotein complex required for efficient transferrin receptor recycling but not for EGFR degradation. The sequence is that of Hepatocyte growth factor-regulated tyrosine kinase substrate (Hgs) from Mus musculus (Mouse).